Reading from the N-terminus, the 100-residue chain is Putative septation protein SpoVG (100 aa).

The protein belongs to the SpoVG family.

Its function is as follows. Could be involved in septation. In Staphylococcus haemolyticus (strain JCSC1435), this protein is Putative septation protein SpoVG.